We begin with the raw amino-acid sequence, 522 residues long: Probable mannosyltransferase KTR5 (522 aa).

Topologically, residues 1–16 (MLLIRRTINAFLGCIH) are cytoplasmic. A helical; Signal-anchor for type II membrane protein membrane pass occupies residues 17 to 37 (CNLTATCILIAFVITMYVVLV). The tract at residues 38 to 82 (SEPASVDGTMGNFLPFSKMDLATKRDRPFYSNCVNTQDYLLNPSY) is stem region. Topologically, residues 38 to 522 (SEPASVDGTM…REDYLRQFGN (485 aa)) are lumenal. Residues 83–522 (IKQNASFVML…REDYLRQFGN (440 aa)) form a catalytic region. Residue Asn-86 is glycosylated (N-linked (GlcNAc...) asparagine). The active-site Nucleophile is Glu-363.

It belongs to the glycosyltransferase 15 family.

It is found in the membrane. Functionally, possible glycosyltransferase that transfers an alpha-D-mannosyl residue from GDP-mannose into lipid-linked oligosaccharide, forming an alpha-(1-&gt;2)-D-mannosyl-D-mannose linkage. In Saccharomyces cerevisiae (strain ATCC 204508 / S288c) (Baker's yeast), this protein is Probable mannosyltransferase KTR5 (KTR5).